The chain runs to 1104 residues: Reverse gyrase (1104 aa).

The segment at 1 to 39 (MAVNSKYHHSCINCGGLNTDERNERGLPCEVCLPEDSPS) adopts an RG N-terminal-type zinc-finger fold. Zn(2+) contacts are provided by Cys11, Cys14, Cys29, and Cys32. Residues Phe75, Asp78, Gln83, Gly103, Gly105, Lys106, Thr107, and Thr108 each coordinate ADP. ATP is bound by residues Gln83 and 100-107 (APTGVGKT). The Helicase ATP-binding domain occupies 87-242 (AKRIVQGKSF…FSTIKQGKIY (156 aa)). The DEAD box signature appears at 203–206 (DDVD). An insert region region spans residues 223–250 (GIPEEIIRKAFSTIKQGKIYERPKNLKP). A Helicase C-terminal domain is found at 300–522 (KLVELLEIFR…EAEANWKELV (223 aa)). A latch region region spans residues 390–460 (RFSLELDKAP…KDEDLELIIP (71 aa)). A topoisomerase I region spans residues 538–1104 (DTSRSLLIIV…EEIKSLMEEG (567 aa)). One can recognise a Toprim domain in the interval 542–699 (SLLIIVESPT…SLRRIEMHEI (158 aa)). Position 548 (Glu548) interacts with Mg(2+). Residues 618–645 (LKRCRDCGYQFTEDRDECPVCSSKNIDD) form an RG C-terminal-type zinc finger. Zn(2+)-binding residues include Cys621, Cys624, Cys635, and Cys638. Asp668 contributes to the Mg(2+) binding site. One can recognise a Topo IA-type catalytic domain in the interval 715–1101 (DFNLVKAQIV…LLYEEIKSLM (387 aa)). Tyr851 (O-(5'-phospho-DNA)-tyrosine intermediate) is an active-site residue.

The protein in the N-terminal section; belongs to the DEAD box helicase family. DDVD subfamily. It in the C-terminal section; belongs to the type IA topoisomerase family. As to quaternary structure, monomer. It depends on Zn(2+) as a cofactor. Mg(2+) is required as a cofactor.

Its subcellular location is the cytoplasm. The catalysed reaction is ATP + H2O = ADP + phosphate + H(+). Modifies the topological state of DNA by introducing positive supercoils in an ATP-dependent process. Increases the linking number in steps of +1. Probably recognizes regions with a low GC content which melt and form a ssDNA bubble, allowing the enzyme to bind and cleave the DNA prior to strand passage; the bubble is probably cleaved by 2 reverse gyrase molecules, one on each strand. Positively supercoils DNA with all NTPS, although it strongly prefers ATP. In the presence of non-hydrolyzable ATP analogs it partially relaxes negative supercoils. Has an intrinsic ATPase activity that is stimulated by DNA; ssDNA is most effective. Binds to single-stranded DNA, transiently cleaves and then rejoins the ends, introducing a positive supercoil in the process. The scissile phosphodiester is attacked by the catalytic tyrosine of the enzyme, resulting in the formation of a DNA-(5'-phosphotyrosyl)-enzyme intermediate. The helicase-like domain is a nucleotide-dependent switch that alternates between a physically closed ATP-bound state with a slight preference for dsDNA, and an open ADP-bound state with a high preference for ssDNA. Whole enzyme has a very poor (k-unwind=0.001 sec(-1)) non-processive helicase activity in the 3'-5' direction that works on short substrates, while the isolated helicase domain has a slightly better helicase activity that works in both directions. Probably involved in rewinding DNA strands in regions of the chromosome that have opened up to allow replication, transcription, DNA repair and/or for DNA protection. The protein is Reverse gyrase of Thermotoga maritima (strain ATCC 43589 / DSM 3109 / JCM 10099 / NBRC 100826 / MSB8).